The chain runs to 496 residues: Solute carrier family 2, facilitated glucose transporter member 3 (496 aa).

Residues 1 to 10 lie on the Cytoplasmic side of the membrane; sequence MGTQKVTPAL. The chain crosses the membrane as a helical span at residues 11–32; that stretch reads IFAITVATIGSFQFGYNTGVIN. Residues 33 to 64 lie on the Extracellular side of the membrane; it reads APEKIIKEFINKTLTDKGNAPPSEVLLTSLWS. Residue asparagine 43 is glycosylated (N-linked (GlcNAc...) asparagine). The chain crosses the membrane as a helical span at residues 65–85; sequence LSVAIFSVGGMIGSFSVGLFV. Residues 86-90 lie on the Cytoplasmic side of the membrane; sequence NRFGR. Residues 91–111 traverse the membrane as a helical segment; that stretch reads RNSMLIVNLLAVTGGCFMGLC. Residues 112 to 118 are Extracellular-facing; sequence KVAKSVE. The chain crosses the membrane as a helical span at residues 119–142; sequence MLILGRLIIGLFCGLCTGFVPMYI. Residues 143 to 153 lie on the Cytoplasmic side of the membrane; that stretch reads GEISPTALRGA. A helical membrane pass occupies residues 154 to 174; the sequence is FGTLNQLGIVVGILVAQIFGL. Glutamine 159 serves as a coordination point for D-glucose. Residues 175-183 are Extracellular-facing; the sequence is EFILGSEEL. The helical transmembrane segment at 184–204 threads the bilayer; sequence WPLLLGFTILPTILQSAALPF. Residues 205–269 lie on the Cytoplasmic side of the membrane; it reads CPESPRFLLI…LFRVSSYRQP (65 aa). Threonine 232 carries the post-translational modification Phosphothreonine. The chain crosses the membrane as a helical span at residues 270–290; the sequence is IIISIVLQLSQQLSGINAVFY. The segment at 277 to 279 is important for selectivity against fructose; sequence QLS. D-glucose-binding positions include 280–281 and asparagine 286; that span reads QQ. The Extracellular segment spans residues 291–304; it reads YSTGIFKDAGVQEP. Residues 305-325 form a helical membrane-spanning segment; the sequence is IYATIGAGVVNTIFTVVSLFL. Position 315 (asparagine 315) interacts with D-glucose. Topologically, residues 326-331 are cytoplasmic; sequence VERAGR. The helical transmembrane segment at 332–352 threads the bilayer; it reads RTLHMIGLGGMAFCSTLMTVS. Over 353 to 363 the chain is Extracellular; the sequence is LLLKDNYNGMS. A helical membrane pass occupies residues 364-389; it reads FVCIGAILVFVAFFEIGPGPIPWFIV. Residues glutamate 378 and tryptophan 386 each contribute to the D-glucose site. At 390 to 399 the chain is on the cytoplasmic side; the sequence is AELFSQGPRP. Residues 400 to 420 form a helical membrane-spanning segment; that stretch reads AAMAVAGCSNWTSNFLVGLLF. Residues 421–429 lie on the Extracellular side of the membrane; that stretch reads PSAAHYLGA. Residues 430–450 traverse the membrane as a helical segment; sequence YVFIIFTGFLITFLAFTFFKV. Over 451-496 the chain is Cytoplasmic; it reads PETRGRTFEDITRAFEGQAHGADRSGKDGVMEVNSIEPAKETTTNV. Phosphoserine is present on residues serine 475 and serine 485. Residue threonine 492 is modified to Phosphothreonine.

It belongs to the major facilitator superfamily. Sugar transporter (TC 2.A.1.1) family. Glucose transporter subfamily. As to quaternary structure, interacts with SMIM43; the interaction may promote SLC2A3-mediated glucose transport to meet the energy needs of mesendoderm differentiation.

Its subcellular location is the cell membrane. The protein localises to the perikaryon. It is found in the cell projection. The catalysed reaction is D-glucose(out) = D-glucose(in). It catalyses the reaction D-galactose(in) = D-galactose(out). Its activity is regulated as follows. Deoxyglucose transport is inhibited by D-glucose, D-galactose and maltose. Galactose transport is inhibited by D-glucose and maltose. In terms of biological role, facilitative glucose transporter. Can also mediate the uptake of various other monosaccharides across the cell membrane. Mediates the uptake of glucose, 2-deoxyglucose, galactose, mannose, xylose and fucose, and probably also dehydroascorbate. Does not mediate fructose transport. Required for mesendoderm differentiation. This is Solute carrier family 2, facilitated glucose transporter member 3 from Pongo abelii (Sumatran orangutan).